We begin with the raw amino-acid sequence, 240 residues long: MAPK-interacting and spindle-stabilizing protein-like (240 aa).

A disordered region spans residues 1 to 240; that stretch reads MSDEFSLADA…PMPGGPHSYH (240 aa). Position 2 is an N-acetylserine (Ser2). Phosphoserine occurs at positions 2, 6, and 15. Residues 16 to 26 are compositionally biased toward polar residues; the sequence is PAKTSAVSNTK. Residues 34–43 show a composition bias toward low complexity; sequence WPGSNPWNNP. Pro residues-rich tracts occupy residues 44-66, 74-122, 159-185, and 193-202; these read SAPP…PFGP, SVPP…PELP, PNMP…PPVP, and AWGPPAPYPA.

This sequence belongs to the MISS family.

This Bos taurus (Bovine) protein is MAPK-interacting and spindle-stabilizing protein-like (MAPK1IP1L).